We begin with the raw amino-acid sequence, 498 residues long: ATP synthase subunit beta, chloroplastic (498 aa).

ATP is bound at residue 172 to 179 (GGAGVGKT).

This sequence belongs to the ATPase alpha/beta chains family. In terms of assembly, F-type ATPases have 2 components, CF(1) - the catalytic core - and CF(0) - the membrane proton channel. CF(1) has five subunits: alpha(3), beta(3), gamma(1), delta(1), epsilon(1). CF(0) has four main subunits: a(1), b(1), b'(1) and c(9-12).

It is found in the plastid. The protein localises to the chloroplast thylakoid membrane. It carries out the reaction ATP + H2O + 4 H(+)(in) = ADP + phosphate + 5 H(+)(out). Produces ATP from ADP in the presence of a proton gradient across the membrane. The catalytic sites are hosted primarily by the beta subunits. The polypeptide is ATP synthase subunit beta, chloroplastic (Calycanthus floridus (Eastern sweetshrub)).